The sequence spans 285 residues: MLYLVGLGLADETDITVKGLEVVKRAERVYLEAYTSILLVSKEKLEAFYGRPVIEADRELVETGSDEILAGADKADVAFLVVGDPFGATTHTDLVLRAREMGIESKVIPNASIMSGIGCTGLQLYNFGQTVSMVFFTENWKPTSYYDRVKENVQLGLHTLVLLDIKVKEQSYENMARGRRIFEPPRYMTVAQCASQMLETEEERKEGVFGPDSLAVGAARVGGPDQKLVVGTLKELSEVDMGPPLHSLVLLGRKAHDLERLYIREFAVDKATFDASWNKGYGATS.

S-adenosyl-L-methionine contacts are provided by residues leucine 9, aspartate 84, glycine 87, serine 112 to isoleucine 113, leucine 163, valine 221, and histidine 246.

It belongs to the diphthine synthase family.

Its subcellular location is the cytoplasm. It catalyses the reaction 2-[(3S)-amino-3-carboxypropyl]-L-histidyl-[translation elongation factor 2] + 4 S-adenosyl-L-methionine = diphthine methyl ester-[translation elongation factor 2] + 4 S-adenosyl-L-homocysteine + 3 H(+). The protein operates within protein modification; peptidyl-diphthamide biosynthesis. S-adenosyl-L-methionine-dependent methyltransferase that catalyzes four methylations of the modified target histidine residue in translation elongation factor 2 (EF-2), to form an intermediate called diphthine methyl ester. The four successive methylation reactions represent the second step of diphthamide biosynthesis. This is Diphthine methyl ester synthase (dph5) from Aspergillus fumigatus (strain ATCC MYA-4609 / CBS 101355 / FGSC A1100 / Af293) (Neosartorya fumigata).